Here is a 390-residue protein sequence, read N- to C-terminus: Succinate--CoA ligase [ADP-forming] subunit beta (390 aa).

One can recognise an ATP-grasp domain in the interval 9 to 245; the sequence is KHLLKKYNIP…TTQEDEHETM (237 aa). ATP is bound by residues K46, 53–55, E99, S102, and E107; that span reads GRG. Positions 200 and 214 each coordinate Mg(2+). Substrate contacts are provided by residues N265 and 322–324; that span reads GIV.

The protein belongs to the succinate/malate CoA ligase beta subunit family. As to quaternary structure, heterotetramer of two alpha and two beta subunits. It depends on Mg(2+) as a cofactor.

The catalysed reaction is succinate + ATP + CoA = succinyl-CoA + ADP + phosphate. The enzyme catalyses GTP + succinate + CoA = succinyl-CoA + GDP + phosphate. It participates in carbohydrate metabolism; tricarboxylic acid cycle; succinate from succinyl-CoA (ligase route): step 1/1. Functionally, succinyl-CoA synthetase functions in the citric acid cycle (TCA), coupling the hydrolysis of succinyl-CoA to the synthesis of either ATP or GTP and thus represents the only step of substrate-level phosphorylation in the TCA. The beta subunit provides nucleotide specificity of the enzyme and binds the substrate succinate, while the binding sites for coenzyme A and phosphate are found in the alpha subunit. The polypeptide is Succinate--CoA ligase [ADP-forming] subunit beta (Coxiella burnetii (strain CbuK_Q154) (Coxiella burnetii (strain Q154))).